The sequence spans 235 residues: Small ribosomal subunit protein uS3 (235 aa).

One can recognise a KH type-2 domain in the interval 39 to 107; it reads IRDFIKKECH…ELHLNIVEVR (69 aa). Residues 213–235 are disordered; sequence AARDRKAQELQDGPAPRGAGGRR.

This sequence belongs to the universal ribosomal protein uS3 family. In terms of assembly, part of the 30S ribosomal subunit. Forms a tight complex with proteins S10 and S14.

Binds the lower part of the 30S subunit head. Binds mRNA in the 70S ribosome, positioning it for translation. In Roseobacter denitrificans (strain ATCC 33942 / OCh 114) (Erythrobacter sp. (strain OCh 114)), this protein is Small ribosomal subunit protein uS3.